The primary structure comprises 304 residues: tRNA pseudouridine synthase B (304 aa).

Residue Asp-38 is the Nucleophile of the active site.

It belongs to the pseudouridine synthase TruB family. Type 1 subfamily.

It catalyses the reaction uridine(55) in tRNA = pseudouridine(55) in tRNA. In terms of biological role, responsible for synthesis of pseudouridine from uracil-55 in the psi GC loop of transfer RNAs. The sequence is that of tRNA pseudouridine synthase B from Listeria monocytogenes serotype 4b (strain F2365).